A 175-amino-acid chain; its full sequence is MRHNKAGRRLGRTTSHRIAMFRNMVTSLFAHERITTTDAKAKELRSIAEKMITLGKRGDLHAVRQAASYIRDKKVVTKLFSTIAPRYKERDGGYTRIIKLGIRPGDCAPLSVIELVEEQFEKKVKKSKPTAPAQAVATKPAVEETREAAAAQPQEPEVEISEVKDPAEECEAKAD.

A disordered region spans residues 124 to 175 (VKKSKPTAPAQAVATKPAVEETREAAAAQPQEPEVEISEVKDPAEECEAKAD). The segment covering 161-175 (SEVKDPAEECEAKAD) has biased composition (basic and acidic residues).

It belongs to the bacterial ribosomal protein bL17 family. As to quaternary structure, part of the 50S ribosomal subunit. Contacts protein L32.

The sequence is that of Large ribosomal subunit protein bL17 from Geobacter sulfurreducens (strain ATCC 51573 / DSM 12127 / PCA).